A 118-amino-acid polypeptide reads, in one-letter code: Cell division protein FtsB (118 aa).

Residues 1–6 are Cytoplasmic-facing; the sequence is MRNWRW. Residues 7-24 form a helical membrane-spanning segment; the sequence is LLLVLAALLSWLQHRFWF. Over 25 to 118 the chain is Periplasmic; it reads GPGNSGEVRM…DLAQPRREKR (94 aa). Residues 30-66 adopt a coiled-coil conformation; it reads GEVRMLQVQIVQQHQENERLRQRNASLAAEVKNLKDG. Residues 97–118 are disordered; it reads PLPNDTSADHGVDLAQPRREKR. Basic and acidic residues predominate over residues 103 to 118; the sequence is SADHGVDLAQPRREKR.

This sequence belongs to the FtsB family. Part of a complex composed of FtsB, FtsL and FtsQ.

It localises to the cell inner membrane. Functionally, essential cell division protein. May link together the upstream cell division proteins, which are predominantly cytoplasmic, with the downstream cell division proteins, which are predominantly periplasmic. The protein is Cell division protein FtsB of Xylella fastidiosa (strain 9a5c).